The following is a 319-amino-acid chain: MEKANETSPVMGFVLLRLSAHPELEKTFFVLILLMYLVILLGNGVLILVTILDSRLHTPMYFFLGNLSFLDICFTTSSVPLVLDSFLTPQETISFSACAVQMALSFAMAGTECLLLSMMAFDRYVAICNPLRYSVIMSKAAYMPMAASSWAIGGAASVVHTSLAIQLPFCGDNVINHFTCEILAVLKLACADISINVISMEVTNVIFLGVPVLFISFSYVFIITTILRIPSAEGRKKVFSTCSAHLTVVIVFYGTLFFMYGKPKSKDSMGADKEDLSDKLIPLFYGVVTPMLNPIIYSLRNKDVKAAVRRLLRPKGFTQ.

Residues 1-26 lie on the Extracellular side of the membrane; the sequence is MEKANETSPVMGFVLLRLSAHPELEK. Asparagine 5 carries an N-linked (GlcNAc...) asparagine glycan. Residues 27–50 form a helical membrane-spanning segment; that stretch reads TFFVLILLMYLVILLGNGVLILVT. Topologically, residues 51 to 58 are cytoplasmic; the sequence is ILDSRLHT. Residues 59-80 traverse the membrane as a helical segment; it reads PMYFFLGNLSFLDICFTTSSVP. Topologically, residues 81 to 101 are extracellular; that stretch reads LVLDSFLTPQETISFSACAVQ. A disulfide bond links cysteine 98 and cysteine 190. A helical transmembrane segment spans residues 102-121; sequence MALSFAMAGTECLLLSMMAF. The Cytoplasmic portion of the chain corresponds to 122 to 140; sequence DRYVAICNPLRYSVIMSKA. A helical membrane pass occupies residues 141–159; that stretch reads AYMPMAASSWAIGGAASVV. Over 160 to 196 the chain is Extracellular; that stretch reads HTSLAIQLPFCGDNVINHFTCEILAVLKLACADISIN. The chain crosses the membrane as a helical span at residues 197–220; it reads VISMEVTNVIFLGVPVLFISFSYV. The Cytoplasmic segment spans residues 221 to 237; the sequence is FIITTILRIPSAEGRKK. The helical transmembrane segment at 238-260 threads the bilayer; sequence VFSTCSAHLTVVIVFYGTLFFMY. The Extracellular portion of the chain corresponds to 261–279; it reads GKPKSKDSMGADKEDLSDK. The helical transmembrane segment at 280 to 299 threads the bilayer; the sequence is LIPLFYGVVTPMLNPIIYSL. The Cytoplasmic segment spans residues 300–319; that stretch reads RNKDVKAAVRRLLRPKGFTQ.

This sequence belongs to the G-protein coupled receptor 1 family.

It localises to the cell membrane. Functionally, odorant receptor. The polypeptide is Olfactory receptor 2S2 (OR2S2) (Homo sapiens (Human)).